The following is a 451-amino-acid chain: Phosphoglucosamine mutase (451 aa).

The active-site Phosphoserine intermediate is the Ser103. 4 residues coordinate Mg(2+): Ser103, Asp243, Asp245, and Asp247. Ser103 bears the Phosphoserine mark.

It belongs to the phosphohexose mutase family. It depends on Mg(2+) as a cofactor. Post-translationally, activated by phosphorylation.

The catalysed reaction is alpha-D-glucosamine 1-phosphate = D-glucosamine 6-phosphate. Functionally, catalyzes the conversion of glucosamine-6-phosphate to glucosamine-1-phosphate. The protein is Phosphoglucosamine mutase of Levilactobacillus brevis (strain ATCC 367 / BCRC 12310 / CIP 105137 / JCM 1170 / LMG 11437 / NCIMB 947 / NCTC 947) (Lactobacillus brevis).